A 64-amino-acid polypeptide reads, in one-letter code: Large ribosomal subunit protein bL35 (64 aa).

A disordered region spans residues 1 to 25; that stretch reads MPKLKTHSGAAKRFKKTATGKVKRS.

This sequence belongs to the bacterial ribosomal protein bL35 family.

This chain is Large ribosomal subunit protein bL35, found in Koribacter versatilis (strain Ellin345).